A 448-amino-acid polypeptide reads, in one-letter code: Adenylosuccinate synthetase (448 aa).

Residues 22–28 and 50–52 contribute to the GTP site; these read GDEGKGK and GHT. The Proton acceptor role is filled by Asp23. Asp23 and Gly50 together coordinate Mg(2+). IMP is bound by residues 23–26, 48–51, Thr139, Arg153, Gln234, Thr249, and Arg321; these read DEGK and NAGH. His51 serves as the catalytic Proton donor. 317–323 lines the substrate pocket; the sequence is SVTGRPR. Residues Arg323, 349-351, and 431-433 each bind GTP; these read KLD and STG.

This sequence belongs to the adenylosuccinate synthetase family. As to quaternary structure, homodimer. Requires Mg(2+) as cofactor.

Its subcellular location is the cytoplasm. It carries out the reaction IMP + L-aspartate + GTP = N(6)-(1,2-dicarboxyethyl)-AMP + GDP + phosphate + 2 H(+). It participates in purine metabolism; AMP biosynthesis via de novo pathway; AMP from IMP: step 1/2. Functionally, plays an important role in the de novo pathway of purine nucleotide biosynthesis. Catalyzes the first committed step in the biosynthesis of AMP from IMP. The chain is Adenylosuccinate synthetase from Paraburkholderia phymatum (strain DSM 17167 / CIP 108236 / LMG 21445 / STM815) (Burkholderia phymatum).